The primary structure comprises 439 residues: Proline--tRNA ligase (439 aa).

The protein belongs to the class-II aminoacyl-tRNA synthetase family. ProS type 2 subfamily. Homodimer.

Its subcellular location is the cytoplasm. The enzyme catalyses tRNA(Pro) + L-proline + ATP = L-prolyl-tRNA(Pro) + AMP + diphosphate. Its function is as follows. Catalyzes the attachment of proline to tRNA(Pro) in a two-step reaction: proline is first activated by ATP to form Pro-AMP and then transferred to the acceptor end of tRNA(Pro). The protein is Proline--tRNA ligase of Bradyrhizobium diazoefficiens (strain JCM 10833 / BCRC 13528 / IAM 13628 / NBRC 14792 / USDA 110).